The following is a 450-amino-acid chain: Protein DA1-related 3 (450 aa).

A coiled-coil region spans residues 1–46 (MVRRKRQEEDEKIEIERVKEESLKLAKQAEEKRRLEESKEQGKRIQ). Composition is skewed to basic and acidic residues over residues 27–47 (KQAE…RIQV) and 56–69 (TSKD…SKDV). Residues 27–87 (KQAEEKRRLE…PSIDGKSEIG (61 aa)) are disordered.

The sequence is that of Protein DA1-related 3 (DAR3) from Arabidopsis thaliana (Mouse-ear cress).